We begin with the raw amino-acid sequence, 476 residues long: Proline--tRNA ligase (476 aa).

This sequence belongs to the class-II aminoacyl-tRNA synthetase family. ProS type 3 subfamily. As to quaternary structure, homodimer.

Its subcellular location is the cytoplasm. It carries out the reaction tRNA(Pro) + L-proline + ATP = L-prolyl-tRNA(Pro) + AMP + diphosphate. In terms of biological role, catalyzes the attachment of proline to tRNA(Pro) in a two-step reaction: proline is first activated by ATP to form Pro-AMP and then transferred to the acceptor end of tRNA(Pro). This is Proline--tRNA ligase from Cenarchaeum symbiosum (strain A).